The following is a 558-amino-acid chain: Potassium-transporting ATPase potassium-binding subunit (558 aa).

11 helical membrane-spanning segments follow: residues 1 to 21 (MDTL…VLVH), 58 to 78 (WPAY…VVYG), 85 to 105 (FLPY…NTAV), 130 to 150 (GLAV…IALV), 179 to 199 (LSLV…FAGF), 245 to 265 (PTAW…FSLP), 279 to 299 (TAIA…LTLF), 374 to 394 (GLYG…LLVG), 416 to 436 (ILVT…IPAV), 484 to 504 (ALGV…LALA), and 527 to 547 (FVGL…FPVL).

This sequence belongs to the KdpA family. In terms of assembly, the system is composed of three essential subunits: KdpA, KdpB and KdpC.

It is found in the cell membrane. Part of the high-affinity ATP-driven potassium transport (or Kdp) system, which catalyzes the hydrolysis of ATP coupled with the electrogenic transport of potassium into the cytoplasm. This subunit binds the extracellular potassium ions and delivers the ions to the membrane domain of KdpB through an intramembrane tunnel. This Clavibacter sepedonicus (Clavibacter michiganensis subsp. sepedonicus) protein is Potassium-transporting ATPase potassium-binding subunit.